Here is a 765-residue protein sequence, read N- to C-terminus: Transcription factor RFX3 (765 aa).

The segment at residues 189-264 (HLQWLLDNYE…YHYYGIRVKP (76 aa)) is a DNA-binding region (RFX-type winged-helix).

Belongs to the RFX family.

The protein resides in the nucleus. Transcription factor required for ciliogenesis and islet cell differentiation during endocrine pancreas development. The sequence is that of Transcription factor RFX3 (rfx3) from Danio rerio (Zebrafish).